Reading from the N-terminus, the 434-residue chain is Arrestin domain-containing protein 1 (434 aa).

The segment at 295 to 345 (PGPGSSPGLLSPVVPSAPPQEEAEAVASGPHFSDPVSLSTKSHSQQQPLST) is disordered. Residues 330–342 (VSLSTKSHSQQQP) show a composition bias toward polar residues. 2 consecutive short sequence motifs (PPxY motif) follow at residues 401 to 404 (PPEY) and 414 to 417 (PPSY).

The protein belongs to the arrestin family. As to quaternary structure, interacts (via PPxY motifs) with ITCH (via WW domains); the interaction is direct and participates in the recruitment of the ubiquitin-protein ligase ITCH to the NOTCH1 receptor. Interacts with ARRB1 and ARRB2; the interaction is direct. Interacts with TSG101; may recruit TSG101 to the plasma membrane. Interacts (via PPxY motifs) with WWP2 (via WW domains); ubiquitinates ARRDC1. Interacts with SLC11A2; controls the incorporation of SLC11A2 into extracellular vesicles through an ubiquitination-dependent mechanism. Interacts with WWP1 (via WW domains). Interacts with NEDD4 (via WW domains). Interacts with PDCD6IP. Ubiquitinated. Ubiquitination by WWP2; promotes localization to extracellular microvesicles. Ubiquitinated by WWP1.

The protein resides in the cell membrane. Functions as an adapter recruiting ubiquitin-protein ligases to their specific substrates. Through an ubiquitination-dependent mechanism plays for instance a role in the incorporation of SLC11A2 into extracellular vesicles. More generally, plays a role in the extracellular transport of proteins between cells through the release in the extracellular space of microvesicles. By participating in the ITCH-mediated ubiquitination and subsequent degradation of NOTCH1, negatively regulates the NOTCH signaling pathway. This is Arrestin domain-containing protein 1 from Rattus norvegicus (Rat).